The chain runs to 503 residues: Na(+)-translocating NADH-quinone reductase subunit B (503 aa).

Transmembrane regions (helical) follow at residues 55-75, 120-140, 161-181, and 186-206; these read MMLVVIALFPATFLAIWNSGI, IFLPLLIISYTVGGACEVLFA, TLPPTIPYWMAALGIAFGVVV, and FGGTGMNILNPALSGRAFLFF. Threonine 248 carries the FMN phosphoryl threonine modification. 5 consecutive transmembrane segments (helical) span residues 361-381, 387-407, 417-437, 452-472, and 475-495; these read TSTFACLLGAVFLVITGIASW, FGIGAFVTAWLFKICSILIAG, FFIPAYRQLFLGGLAFGLVFM, WIYGLFIGFMTIIIRLINPAY, and GVMLAILLGNVFAPLLDYFAV.

The protein belongs to the NqrB/RnfD family. As to quaternary structure, composed of six subunits; NqrA, NqrB, NqrC, NqrD, NqrE and NqrF. FMN is required as a cofactor.

It is found in the cell inner membrane. It catalyses the reaction a ubiquinone + n Na(+)(in) + NADH + H(+) = a ubiquinol + n Na(+)(out) + NAD(+). Functionally, NQR complex catalyzes the reduction of ubiquinone-1 to ubiquinol by two successive reactions, coupled with the transport of Na(+) ions from the cytoplasm to the periplasm. NqrA to NqrE are probably involved in the second step, the conversion of ubisemiquinone to ubiquinol. This Chlamydia abortus (strain DSM 27085 / S26/3) (Chlamydophila abortus) protein is Na(+)-translocating NADH-quinone reductase subunit B.